Reading from the N-terminus, the 68-residue chain is Protein SlyX homolog (68 aa).

Belongs to the SlyX family.

This Pseudomonas fluorescens (strain SBW25) protein is Protein SlyX homolog.